The following is a 356-amino-acid chain: Protein-glutamate methylesterase/protein-glutamine glutaminase 2 (356 aa).

The Response regulatory domain maps to 4 to 121 (RALVVDDSAL…SQSMPEMAEE (118 aa)). Residue Asp55 is modified to 4-aspartylphosphate. In terms of domain architecture, CheB-type methylesterase spans 161–356 (KAAPRNILAI…MAEEIIRIIG (196 aa)). Active-site residues include Ser173, His200, and Asp300.

The protein belongs to the CheB family. In terms of processing, phosphorylated by CheA. Phosphorylation of the N-terminal regulatory domain activates the methylesterase activity.

The protein resides in the cytoplasm. The catalysed reaction is [protein]-L-glutamate 5-O-methyl ester + H2O = L-glutamyl-[protein] + methanol + H(+). The enzyme catalyses L-glutaminyl-[protein] + H2O = L-glutamyl-[protein] + NH4(+). Involved in chemotaxis. Part of a chemotaxis signal transduction system that modulates chemotaxis in response to various stimuli. Catalyzes the demethylation of specific methylglutamate residues introduced into the chemoreceptors (methyl-accepting chemotaxis proteins or MCP) by CheR. Also mediates the irreversible deamidation of specific glutamine residues to glutamic acid. The chain is Protein-glutamate methylesterase/protein-glutamine glutaminase 2 from Methanosarcina acetivorans (strain ATCC 35395 / DSM 2834 / JCM 12185 / C2A).